A 107-amino-acid chain; its full sequence is Biphenyl 2,3-dioxygenase, ferredoxin component (107 aa).

In terms of domain architecture, Rieske spans 4 to 99 (TKICSSGDLA…VKLEGDDVLV (96 aa)). 4 residues coordinate [2Fe-2S] cluster: Cys-43, His-45, Cys-62, and His-65.

It belongs to the bacterial ring-hydroxylating dioxygenase ferredoxin component family. The multicomponent biphenyl dioxygenase system is composed of a ferredoxin reductase (BphA4), a ferredoxin (BphA3), and a terminal oxygenase (BphA1A2). [2Fe-2S] cluster serves as cofactor.

The protein operates within xenobiotic degradation; biphenyl degradation. Functionally, ferredoxin component of the biphenyl dioxygenase system that catalyzes the stereospecific dihydroxylation of the aromatic ring of biphenyl, yielding a dihydrodiol compound. Is likely involved in biphenyl degradation that allows growth of Rhodococcus sp. strain RHA1 on biphenyl as the sole source of carbon and energy. The dioxygenase system can also use naphtalene and 4-chlorobiphenyl (4-CB) as substrates, as well as some polychlorinated biphenyls (PCB) such as 2,2'-dichlorobiphenyl, 2,3-dichlorobiphenyl and 2,5,2'-trichlorobiphenyl. It exhibits weak activity toward dibenzofuran and dibenzo-p-dioxin. Electrons are transferred from NADH to the [2Fe-2S] cluster in BphA1 via FAD of BphA4 and [2Fe-2S] cluster of BphA3. In Rhodococcus jostii (strain RHA1), this protein is Biphenyl 2,3-dioxygenase, ferredoxin component.